A 939-amino-acid chain; its full sequence is Valine--tRNA ligase (939 aa).

Residues 45 to 55 (PNVTGTLHMGH) carry the 'HIGH' region motif. A 'KMSKS' region motif is present at residues 549-553 (KMSKS). Lys552 provides a ligand contact to ATP. Positions 876-939 (AAETARLRKE…KIRVQLVKLA (64 aa)) form a coiled coil.

Belongs to the class-I aminoacyl-tRNA synthetase family. ValS type 1 subfamily. In terms of assembly, monomer.

It localises to the cytoplasm. The enzyme catalyses tRNA(Val) + L-valine + ATP = L-valyl-tRNA(Val) + AMP + diphosphate. Its function is as follows. Catalyzes the attachment of valine to tRNA(Val). As ValRS can inadvertently accommodate and process structurally similar amino acids such as threonine, to avoid such errors, it has a 'posttransfer' editing activity that hydrolyzes mischarged Thr-tRNA(Val) in a tRNA-dependent manner. The chain is Valine--tRNA ligase from Chromobacterium violaceum (strain ATCC 12472 / DSM 30191 / JCM 1249 / CCUG 213 / NBRC 12614 / NCIMB 9131 / NCTC 9757 / MK).